The sequence spans 167 residues: Small ribosomal subunit protein uS9 (167 aa).

Residues 136-167 (KRAGFLTRDPRATERKKYGLKKARKAPQYSKR) form a disordered region. The segment covering 143 to 152 (RDPRATERKK) has biased composition (basic and acidic residues). Positions 153–167 (YGLKKARKAPQYSKR) are enriched in basic residues.

Belongs to the universal ribosomal protein uS9 family.

This is Small ribosomal subunit protein uS9 from Nocardia farcinica (strain IFM 10152).